We begin with the raw amino-acid sequence, 115 residues long: Holo-[acyl-carrier-protein] synthase (115 aa).

2 residues coordinate Mg(2+): aspartate 8 and glutamate 50.

The protein belongs to the P-Pant transferase superfamily. AcpS family. Requires Mg(2+) as cofactor.

The protein resides in the cytoplasm. The enzyme catalyses apo-[ACP] + CoA = holo-[ACP] + adenosine 3',5'-bisphosphate + H(+). Transfers the 4'-phosphopantetheine moiety from coenzyme A to a Ser of acyl-carrier-protein. This Cutibacterium acnes (strain DSM 16379 / KPA171202) (Propionibacterium acnes) protein is Holo-[acyl-carrier-protein] synthase.